We begin with the raw amino-acid sequence, 157 residues long: Large ribosomal subunit protein eL24 (157 aa).

Residues 94–157 (RNQKPEVRKA…ISAPRVGGKR (64 aa)) form a disordered region. The segment covering 96–117 (QKPEVRKAQREQAIRAAKESKK) has biased composition (basic and acidic residues). Residues 123 to 140 (KKPAAASAKTSAKTAQKP) are compositionally biased toward low complexity.

Belongs to the eukaryotic ribosomal protein eL24 family. In terms of assembly, component of the large ribosomal subunit.

Its subcellular location is the cytoplasm. Functionally, component of the large ribosomal subunit. The ribosome is a large ribonucleoprotein complex responsible for the synthesis of proteins in the cell. In Gillichthys mirabilis (Long-jawed mudsucker), this protein is Large ribosomal subunit protein eL24 (rpl24).